The primary structure comprises 269 residues: Formamidopyrimidine-DNA glycosylase (269 aa).

The Schiff-base intermediate with DNA role is filled by P2. E3 functions as the Proton donor in the catalytic mechanism. The Proton donor; for beta-elimination activity role is filled by K57. 3 residues coordinate DNA: H90, R109, and K150. Residues 235 to 269 (QVYGRKGEPCRVCGTPIVATKHAQRATFYCRHCQK) form an FPG-type zinc finger. R259 serves as the catalytic Proton donor; for delta-elimination activity.

It belongs to the FPG family. Monomer. Requires Zn(2+) as cofactor.

The catalysed reaction is Hydrolysis of DNA containing ring-opened 7-methylguanine residues, releasing 2,6-diamino-4-hydroxy-5-(N-methyl)formamidopyrimidine.. It catalyses the reaction 2'-deoxyribonucleotide-(2'-deoxyribose 5'-phosphate)-2'-deoxyribonucleotide-DNA = a 3'-end 2'-deoxyribonucleotide-(2,3-dehydro-2,3-deoxyribose 5'-phosphate)-DNA + a 5'-end 5'-phospho-2'-deoxyribonucleoside-DNA + H(+). Its function is as follows. Involved in base excision repair of DNA damaged by oxidation or by mutagenic agents. Acts as a DNA glycosylase that recognizes and removes damaged bases. Has a preference for oxidized purines, such as 7,8-dihydro-8-oxoguanine (8-oxoG). Has AP (apurinic/apyrimidinic) lyase activity and introduces nicks in the DNA strand. Cleaves the DNA backbone by beta-delta elimination to generate a single-strand break at the site of the removed base with both 3'- and 5'-phosphates. The sequence is that of Formamidopyrimidine-DNA glycosylase from Salmonella heidelberg (strain SL476).